Consider the following 208-residue polypeptide: MKKRLCAVLLASPLLFSAAVFADDAQQLRDKLIGTASLKADFKQTVTDVNKKVIQTGSGIFALAYPNQFYWHLTQPDESQIVADGKDLWIYNPFAEEVVIMDFAEAINASPIALLVHRDDATWSQYAVTKQQDCYEIKPKAIDSGILSVKVCFKNAQLANFNVADDKGNLSQFDLSNQQAITDKDKALFSFVLPDNVDVDDQRRKTAH.

Positions 1–22 are cleaved as a signal peptide; that stretch reads MKKRLCAVLLASPLLFSAAVFA.

This sequence belongs to the LolA family. As to quaternary structure, monomer.

Its subcellular location is the periplasm. Participates in the translocation of lipoproteins from the inner membrane to the outer membrane. Only forms a complex with a lipoprotein if the residue after the N-terminal Cys is not an aspartate (The Asp acts as a targeting signal to indicate that the lipoprotein should stay in the inner membrane). The protein is Outer-membrane lipoprotein carrier protein of Shewanella baltica (strain OS195).